Consider the following 391-residue polypeptide: Phosphoglycerate kinase (391 aa).

Substrate-binding positions include 23-25 (DFN), R38, 61-64 (HLGK), R117, and R150. Residues K201, G291, E322, and 348–351 (GGDS) contribute to the ATP site.

This sequence belongs to the phosphoglycerate kinase family. In terms of assembly, monomer.

The protein resides in the cytoplasm. The enzyme catalyses (2R)-3-phosphoglycerate + ATP = (2R)-3-phospho-glyceroyl phosphate + ADP. It participates in carbohydrate degradation; glycolysis; pyruvate from D-glyceraldehyde 3-phosphate: step 2/5. This Clostridium beijerinckii (strain ATCC 51743 / NCIMB 8052) (Clostridium acetobutylicum) protein is Phosphoglycerate kinase.